Reading from the N-terminus, the 532-residue chain is Probable galacturonosyltransferase 14 (532 aa).

At 1 to 40 (MQLHISPSMRSITISSSNEFIDLMKIKVAARHISYRTLFH) the chain is on the cytoplasmic side. The chain crosses the membrane as a helical; Signal-anchor for type II membrane protein span at residues 41-61 (TILILAFLLPFVFILTAVVTL). Over 62–532 (EGVNKCSSID…DFIKNCHILE (471 aa)) the chain is Lumenal. N-linked (GlcNAc...) asparagine glycans are attached at residues asparagine 305, asparagine 395, asparagine 444, and asparagine 519.

Belongs to the glycosyltransferase 8 family. Expressed in roots, inflorescences, siliques, leaves and stems. Accumulates in pollen grains.

It is found in the golgi apparatus membrane. The protein operates within glycan metabolism; pectin biosynthesis. May be involved in pectin and/or xylans biosynthesis in cell walls. Together with GAUT13, required for pollen tube growth, possibly through the regulation of pectin biosynthesis and repartition in the pollen tube wall. This chain is Probable galacturonosyltransferase 14, found in Arabidopsis thaliana (Mouse-ear cress).